Consider the following 113-residue polypeptide: Kita-kyushu lung cancer antigen 1 (113 aa).

Residues 1-3 (MNF) lie on the Cytoplasmic side of the membrane. A helical; Signal-anchor for type II membrane protein transmembrane segment spans residues 4 to 21 (YLLLASSILCALIVFWKY). Over 22-113 (RRFQRNTGEM…RGASPHRKST (92 aa)) the chain is Extracellular. The N-linked (GlcNAc...) asparagine glycan is linked to asparagine 83.

In terms of tissue distribution, specifically expressed in testis. Expressed by cancer cell lines.

The protein localises to the cell membrane. The protein is Kita-kyushu lung cancer antigen 1 (CT83) of Homo sapiens (Human).